Reading from the N-terminus, the 329-residue chain is Tryptophan--tRNA ligase (329 aa).

ATP-binding positions include 9-11 and 17-18; these read QPS and GN. A 'HIGH' region motif is present at residues 10–18; the sequence is PSGIPTIGN. Asp-133 contributes to the L-tryptophan binding site. Residues 145–147, Val-184, and 193–197 contribute to the ATP site; these read GDD and KMSKS. The short motif at 193 to 197 is the 'KMSKS' region element; it reads KMSKS.

This sequence belongs to the class-I aminoacyl-tRNA synthetase family. As to quaternary structure, homodimer.

Its subcellular location is the cytoplasm. The catalysed reaction is tRNA(Trp) + L-tryptophan + ATP = L-tryptophyl-tRNA(Trp) + AMP + diphosphate + H(+). In terms of biological role, catalyzes the attachment of tryptophan to tRNA(Trp). This chain is Tryptophan--tRNA ligase, found in Staphylococcus aureus (strain MRSA252).